A 131-amino-acid chain; its full sequence is Histone H2A.1 (131 aa).

S2 bears the N-acetylserine mark. An N6-acetyllysine mark is found at K4 and K7. Position 105 is an N5-methylglutamine (Q105). A Glycyl lysine isopeptide (Lys-Gly) (interchain with G-Cter in SUMO) cross-link involves residue K126. A Phosphoserine modification is found at S128. A [ST]-Q motif motif is present at residues 128 to 129 (SQ).

Belongs to the histone H2A family. As to quaternary structure, the nucleosome is a histone octamer containing two molecules each of H2A, H2B, H3 and H4 assembled in one H3-H4 heterotetramer and two H2A-H2B heterodimers. The octamer wraps approximately 147 bp of DNA. In terms of processing, phosphorylated to form H2AS128ph (gamma-H2A) in response to DNA double-strand breaks (DSBs) generated by exogenous genotoxic agents and by stalled replication forks. Phosphorylation is dependent on the DNA damage checkpoint kinases MEC1/ATR and TEL1/ATM, spreads on either side of a detected DSB site and may mark the surrounding chromatin for recruitment of proteins required for DNA damage signaling and repair. Gamma-H2A is removed from the DNA prior to the strand invasion-primer extension step of the repair process and subsequently dephosphorylated by PPH3, a component of the histone H2A phosphatase complex (HTP-C). Dephosphorylation is necessary for efficient recovery from the DNA damage checkpoint. Post-translationally, sumoylation on Lys-126 may lead to transcriptional repression. Acetylated by ESA1 to form H2AK4ac and H2AK7ac.

The protein resides in the nucleus. The protein localises to the chromosome. In terms of biological role, core component of nucleosome which plays a central role in DNA double strand break (DSB) repair. Nucleosomes wrap and compact DNA into chromatin, limiting DNA accessibility to the cellular machineries which require DNA as a template. Histones thereby play a central role in transcription regulation, DNA repair, DNA replication and chromosomal stability. DNA accessibility is regulated via a complex set of post-translational modifications of histones, also called histone code, and nucleosome remodeling. The protein is Histone H2A.1 (HTA1) of Eremothecium gossypii (strain ATCC 10895 / CBS 109.51 / FGSC 9923 / NRRL Y-1056) (Yeast).